We begin with the raw amino-acid sequence, 1024 residues long: Beta-galactosidase (1024 aa).

2 residues coordinate substrate: Asn-103 and Asp-202. Residue Asp-202 coordinates Na(+). Glu-417, His-419, and Glu-462 together coordinate Mg(2+). Residues Glu-462 and 538–541 (EYAH) each bind substrate. Catalysis depends on Glu-462, which acts as the Proton donor. The Nucleophile role is filled by Glu-538. Position 598 (Asn-598) interacts with Mg(2+). The Na(+) site is built by Phe-602 and Asn-605. Residues Asn-605 and Trp-1000 each contribute to the substrate site.

It belongs to the glycosyl hydrolase 2 family. In terms of assembly, homotetramer. Mg(2+) is required as a cofactor. Na(+) serves as cofactor.

The catalysed reaction is Hydrolysis of terminal non-reducing beta-D-galactose residues in beta-D-galactosides.. The sequence is that of Beta-galactosidase from Escherichia coli O6:K15:H31 (strain 536 / UPEC).